The primary structure comprises 398 residues: 1-deoxy-D-xylulose 5-phosphate reductoisomerase (398 aa).

Thr13, Gly14, Ser15, Ile16, Arg40, and Asn127 together coordinate NADPH. Lys128 is a binding site for 1-deoxy-D-xylulose 5-phosphate. Position 129 (Glu129) interacts with NADPH. Asp153 contacts Mn(2+). 1-deoxy-D-xylulose 5-phosphate-binding residues include Ser154, Glu155, Ser188, and His211. Glu155 serves as a coordination point for Mn(2+). Position 217 (Gly217) interacts with NADPH. 4 residues coordinate 1-deoxy-D-xylulose 5-phosphate: Ser224, Asn229, Lys230, and Glu233. Residue Glu233 participates in Mn(2+) binding.

Belongs to the DXR family. The cofactor is Mg(2+). Mn(2+) serves as cofactor.

The enzyme catalyses 2-C-methyl-D-erythritol 4-phosphate + NADP(+) = 1-deoxy-D-xylulose 5-phosphate + NADPH + H(+). Its pathway is isoprenoid biosynthesis; isopentenyl diphosphate biosynthesis via DXP pathway; isopentenyl diphosphate from 1-deoxy-D-xylulose 5-phosphate: step 1/6. In terms of biological role, catalyzes the NADPH-dependent rearrangement and reduction of 1-deoxy-D-xylulose-5-phosphate (DXP) to 2-C-methyl-D-erythritol 4-phosphate (MEP). This Cellvibrio japonicus (strain Ueda107) (Pseudomonas fluorescens subsp. cellulosa) protein is 1-deoxy-D-xylulose 5-phosphate reductoisomerase.